Consider the following 64-residue polypeptide: MFTVFLLVVLATTVVSSTSGRRAFRGRNAAAKASGLVGLTDRRPECCSDPRCNSTHPELCGGRR.

The N-terminal stretch at 1–17 (MFTVFLLVVLATTVVSS) is a signal peptide. A propeptide spanning residues 18–43 (TSGRRAFRGRNAAAKASGLVGLTDRR) is cleaved from the precursor. Disulfide bonds link cysteine 46–cysteine 52 and cysteine 47–cysteine 60. Positions 48-50 (SDP) are ser-Xaa-Pro motif, crucial for potent interaction with nAChR. Position 61 is a glycine amide (glycine 61).

It belongs to the conotoxin A superfamily. Expressed by the venom duct.

The protein localises to the secreted. Alpha-conotoxins act on postsynaptic membranes, they bind to the nicotinic acetylcholine receptors (nAChR) and thus inhibit them. The protein is Alpha-conotoxin-like Ai1.2 of Conus ammiralis (Admiral cone).